Reading from the N-terminus, the 443-residue chain is Ribulose bisphosphate carboxylase large chain (443 aa).

Substrate-binding residues include asparagine 89 and threonine 139. The active-site Proton acceptor is the lysine 141. Lysine 143 is a substrate binding site. The Mg(2+) site is built by lysine 167, aspartate 169, and glutamate 170. N6-carboxylysine is present on lysine 167. Histidine 260 functions as the Proton acceptor in the catalytic mechanism. Residues arginine 261, histidine 293, and serine 345 each coordinate substrate.

This sequence belongs to the RuBisCO large chain family. Type I subfamily. As to quaternary structure, heterohexadecamer of 8 large chains and 8 small chains; disulfide-linked. The disulfide link is formed within the large subunit homodimers. Requires Mg(2+) as cofactor. Post-translationally, the disulfide bond which can form in the large chain dimeric partners within the hexadecamer appears to be associated with oxidative stress and protein turnover.

The protein localises to the plastid. The protein resides in the chloroplast. It carries out the reaction 2 (2R)-3-phosphoglycerate + 2 H(+) = D-ribulose 1,5-bisphosphate + CO2 + H2O. The enzyme catalyses D-ribulose 1,5-bisphosphate + O2 = 2-phosphoglycolate + (2R)-3-phosphoglycerate + 2 H(+). In terms of biological role, ruBisCO catalyzes two reactions: the carboxylation of D-ribulose 1,5-bisphosphate, the primary event in carbon dioxide fixation, as well as the oxidative fragmentation of the pentose substrate in the photorespiration process. Both reactions occur simultaneously and in competition at the same active site. This Sesamum indicum (Oriental sesame) protein is Ribulose bisphosphate carboxylase large chain.